The primary structure comprises 631 residues: Peptidyl-prolyl cis-trans isomerase CYP71 (631 aa).

A disordered region spans residues 26–45 (VEEEEPMVGPGPAPRGKRKR). 4 WD repeats span residues 68–106 (MHRDVVTHVAVSAAEFFISGSMDGHLKFWKKKGVGIEFA), 111–150 (SHLGPIEGLAVSIDGLLCCTISNDHAVKIYDVVNYDMMAM), 201–240 (IHMNPIKVMKYNPVSDTMISGDTKGIIEYWSATTLQFPED), and 257–297 (KCKT…RRVY). Residues 474–628 (LPENVIMHTT…QDVKILNVTV (155 aa)) enclose the PPIase cyclophilin-type domain.

Belongs to the cyclophilin-type PPIase family. Interacts with FAS1 and LHP1. Interacts (via WD repeat domain) with histone H3. In terms of tissue distribution, ubiquitous. Expressed in the meristems.

It localises to the nucleus. It catalyses the reaction [protein]-peptidylproline (omega=180) = [protein]-peptidylproline (omega=0). Its function is as follows. PPIases accelerate the folding of proteins. It catalyzes the cis-trans isomerization of proline imidic peptide bonds in oligopeptides. Histone proline isomerase that increases the rate of cis-trans isomerization of the synthetic histone H3 peptides H3P30 (RKSAP30F-p-nitroanilide) and H3P30K27me3 (RKme3-SAP30F-p-nitroanilide) in the histone H3 N-terminal tail, in vitro. Histone remodeling factor involved in chromatin-based gene silencing. Reinforces H3K27 methylation. Involved in fundamental processes of chromatin assembly and histone modification by mediating the targeting of FAS1 and LHP1 on the chromatin. Required for the formation and development of leaves, for normal phyllotaxy and for the formation, maintenance and activity of root and shoot apical meristems. The chain is Peptidyl-prolyl cis-trans isomerase CYP71 from Arabidopsis thaliana (Mouse-ear cress).